We begin with the raw amino-acid sequence, 633 residues long: DNA mismatch repair protein MutL (633 aa).

Disordered stretches follow at residues 337–364 (RPDDQLAPPGATSLTEPRPTGAAAGEFG) and 383–405 (VGWSGGSSASGGSSGYSAYTRPE). A compositionally biased stretch (gly residues) spans 385–396 (WSGGSSASGGSS).

Belongs to the DNA mismatch repair MutL/HexB family.

Its function is as follows. This protein is involved in the repair of mismatches in DNA. It is required for dam-dependent methyl-directed DNA mismatch repair. May act as a 'molecular matchmaker', a protein that promotes the formation of a stable complex between two or more DNA-binding proteins in an ATP-dependent manner without itself being part of a final effector complex. The chain is DNA mismatch repair protein MutL from Pseudomonas aeruginosa (strain LESB58).